A 356-amino-acid polypeptide reads, in one-letter code: 3-dehydroquinate synthase (356 aa).

Residues 106–110 (GVVGD), 130–131 (TT), Lys-143, and Lys-152 each bind NAD(+). Zn(2+) is bound by residues Glu-185, His-248, and His-265.

Belongs to the sugar phosphate cyclases superfamily. Dehydroquinate synthase family. Co(2+) serves as cofactor. The cofactor is Zn(2+). NAD(+) is required as a cofactor.

It is found in the cytoplasm. It catalyses the reaction 7-phospho-2-dehydro-3-deoxy-D-arabino-heptonate = 3-dehydroquinate + phosphate. The protein operates within metabolic intermediate biosynthesis; chorismate biosynthesis; chorismate from D-erythrose 4-phosphate and phosphoenolpyruvate: step 2/7. In terms of biological role, catalyzes the conversion of 3-deoxy-D-arabino-heptulosonate 7-phosphate (DAHP) to dehydroquinate (DHQ). The polypeptide is 3-dehydroquinate synthase (Thermoanaerobacter sp. (strain X514)).